Here is a 490-residue protein sequence, read N- to C-terminus: GTPase Der (490 aa).

2 consecutive EngA-type G domains span residues 3 to 166 and 203 to 376; these read PVVA…MEDL and IKLA…DSST. GTP is bound by residues 9–16, 56–60, 118–121, 209–216, 256–260, and 321–324; these read GRPNVGKS, DTGGI, NKTD, DTAGV, and NKWD. Residues 377–461 enclose the KH-like domain; the sequence is RRVGTSMLTR…PIRIQFKEGE (85 aa).

This sequence belongs to the TRAFAC class TrmE-Era-EngA-EngB-Septin-like GTPase superfamily. EngA (Der) GTPase family. In terms of assembly, associates with the 50S ribosomal subunit.

In terms of biological role, GTPase that plays an essential role in the late steps of ribosome biogenesis. This Escherichia coli O157:H7 protein is GTPase Der.